The following is a 242-amino-acid chain: Zinc import ATP-binding protein ZnuC (242 aa).

The 218-residue stretch at 24–241 (INVENLSFFY…EKFLKMFSSY (218 aa)) folds into the ABC transporter domain. 56–63 (GPNGGGKT) contacts ATP.

This sequence belongs to the ABC transporter superfamily. Zinc importer (TC 3.A.1.15.5) family. The complex is composed of two ATP-binding proteins (ZnuC), two transmembrane proteins (ZnuB) and a solute-binding protein (ZnuA).

It localises to the cell inner membrane. The catalysed reaction is Zn(2+)(out) + ATP(in) + H2O(in) = Zn(2+)(in) + ADP(in) + phosphate(in) + H(+)(in). Its function is as follows. Part of the ABC transporter complex ZnuABC involved in zinc import. Responsible for energy coupling to the transport system. This Ehrlichia chaffeensis (strain ATCC CRL-10679 / Arkansas) protein is Zinc import ATP-binding protein ZnuC.